A 746-amino-acid chain; its full sequence is 4-hydroxy-3-methylbut-2-en-1-yl diphosphate synthase (flavodoxin) (746 aa).

Cys653, Cys656, Cys687, and Glu694 together coordinate [4Fe-4S] cluster.

Belongs to the IspG family. [4Fe-4S] cluster serves as cofactor.

It catalyses the reaction (2E)-4-hydroxy-3-methylbut-2-enyl diphosphate + oxidized [flavodoxin] + H2O + 2 H(+) = 2-C-methyl-D-erythritol 2,4-cyclic diphosphate + reduced [flavodoxin]. It functions in the pathway isoprenoid biosynthesis; isopentenyl diphosphate biosynthesis via DXP pathway; isopentenyl diphosphate from 1-deoxy-D-xylulose 5-phosphate: step 5/6. Its function is as follows. Converts 2C-methyl-D-erythritol 2,4-cyclodiphosphate (ME-2,4cPP) into 1-hydroxy-2-methyl-2-(E)-butenyl 4-diphosphate. This is 4-hydroxy-3-methylbut-2-en-1-yl diphosphate synthase (flavodoxin) from Chlorobaculum tepidum (strain ATCC 49652 / DSM 12025 / NBRC 103806 / TLS) (Chlorobium tepidum).